The chain runs to 400 residues: Golgin-45 (400 aa).

Positions 1 to 36 are disordered; that stretch reads MEKMTTLKSFESKGILTSTPIRGAGDGMETEEPPKS. The short motif at 22–26 is the Tankyrase-binding motif element; the sequence is RGAGD. At S53 the chain carries Phosphoserine. A coiled-coil region spans residues 126-263; that stretch reads LSEVKKVLEK…LSEREQFRQE (138 aa). S356 carries the phosphoserine modification. Positions 394–400 are essential for interaction with GORASP2; it reads QGELLAL.

In terms of assembly, interacts with GORASP2. Interacts with the GTP-bound form of RAB2, but not with other Golgi Rab proteins. Identified in a complex with RAB2 and GORASP2. Post-translationally, ADP-ribosylated by tankyrase TNKS and TNKS2. Poly-ADP-ribosylated protein is recognized by RNF146, followed by ubiquitination. Ubiquitinated by RNF146 when poly-ADP-ribosylated, leading to its degradation.

The protein resides in the golgi apparatus membrane. In terms of biological role, required for normal Golgi structure and for protein transport from the endoplasmic reticulum (ER) through the Golgi apparatus to the cell surface. The sequence is that of Golgin-45 from Rattus norvegicus (Rat).